The sequence spans 86 residues: UPF0367 protein PMN2A_1492 (86 aa).

Belongs to the UPF0367 family.

The protein is UPF0367 protein PMN2A_1492 of Prochlorococcus marinus (strain NATL2A).